The sequence spans 1410 residues: DNA-directed RNA polymerase subunit beta' (1410 aa).

The Zn(2+) site is built by Cys-70, Cys-72, Cys-85, and Cys-88. Mg(2+) contacts are provided by Asp-460, Asp-462, and Asp-464. Cys-814, Cys-888, Cys-895, and Cys-898 together coordinate Zn(2+).

Belongs to the RNA polymerase beta' chain family. In terms of assembly, the RNAP catalytic core consists of 2 alpha, 1 beta, 1 beta' and 1 omega subunit. When a sigma factor is associated with the core the holoenzyme is formed, which can initiate transcription. It depends on Mg(2+) as a cofactor. Zn(2+) serves as cofactor.

It carries out the reaction RNA(n) + a ribonucleoside 5'-triphosphate = RNA(n+1) + diphosphate. DNA-dependent RNA polymerase catalyzes the transcription of DNA into RNA using the four ribonucleoside triphosphates as substrates. The polypeptide is DNA-directed RNA polymerase subunit beta' (Shewanella denitrificans (strain OS217 / ATCC BAA-1090 / DSM 15013)).